The following is a 368-amino-acid chain: Isopentenyl-diphosphate delta-isomerase (368 aa).

7 to 8 is a binding site for substrate; it reads RK. Residues threonine 65, 66–68, serine 96, and asparagine 125 contribute to the FMN site; that span reads GMT. 96–98 contacts substrate; the sequence is SQR. Residue glutamine 160 participates in substrate binding. Glutamate 161 contributes to the Mg(2+) binding site. FMN is bound by residues lysine 193, serine 218, threonine 223, 275 to 277, and 296 to 297; these read GIR and AL.

This sequence belongs to the IPP isomerase type 2 family. Homooctamer. Dimer of tetramers. FMN is required as a cofactor. NADPH serves as cofactor. Requires Mg(2+) as cofactor.

The protein localises to the cytoplasm. The catalysed reaction is isopentenyl diphosphate = dimethylallyl diphosphate. Functionally, involved in the biosynthesis of isoprenoids. Catalyzes the 1,3-allylic rearrangement of the homoallylic substrate isopentenyl (IPP) to its allylic isomer, dimethylallyl diphosphate (DMAPP). The protein is Isopentenyl-diphosphate delta-isomerase of Saccharolobus islandicus (strain M.16.27) (Sulfolobus islandicus).